The sequence spans 209 residues: Cytidylyl-2-hydroxypropylphosphonate hydrolase (209 aa).

A divalent metal cation contacts are provided by asparagine 111, aspartate 127, glutamate 129, and aspartate 131. Lysine 144 acts as the Proton donor in catalysis. Aspartate 145 is a binding site for a divalent metal cation.

It belongs to the FomD family. Monomer in solution. Mn(2+) serves as cofactor. Co(2+) is required as a cofactor.

It carries out the reaction cytidine 5'-({hydroxy[(S)-2-hydroxypropyl]phosphonoyl}phosphate) + H2O = (S)-2-hydroxypropylphosphonate + CMP + H(+). Its pathway is antibiotic biosynthesis; fosfomycin biosynthesis. Its activity is regulated as follows. Hydrolysis of (S)-HPP-CMP is inhibited by CDP. Its function is as follows. Involved in fosfomycin biosynthesis. Catalyzes the hydrolysis of cytidylyl (S)-2-hydroxypropylphosphonate ((S)-HPP-CMP) to give (S)-2-hydroxypropylphosphonate ((S)-HPP) and CMP. Can also hydrolyze (R)-HPP-CMP and cytidylyl 2-hydroxyethylphosphonate (HEP-CMP), which is a biosynthetic intermediate before C-methylation, but the catalytic efficiency is much higher with (S)-HPP-CMP. The protein is Cytidylyl-2-hydroxypropylphosphonate hydrolase of Streptomyces wedmorensis.